The following is a 429-amino-acid chain: Apolipoprotein A-IV (429 aa).

Residues 1-20 (MFLKAVVLTLALVAVTGARA) form the signal peptide. 13 consecutive repeat copies span residues 33–54 (DYFS…KSEL), 60–81 (ALFQ…KKLV), 82–103 (PFAT…EEIR), 115–136 (PHAN…QRLE), 137–158 (PYTD…RQLT), 159–180 (PYAQ…TSLR), 181–202 (PHAD…ERLT), 203–224 (PYAD…RSLA), 225–246 (PYAQ…FQMK), 247–268 (KNAE…QRLA), 269–286 (PLAE…EGLQ), 287–308 (KSLA…LRVE), and 309–330 (PYGE…QKLG). The segment at 33-330 (DYFSQLSSNA…QMEQLRQKLG (298 aa)) is 13 X 22 AA approximate tandem repeats. The segment at 359–429 (KEKESQDNTL…QVQMLAPLES (71 aa)) is disordered. Residues 381–420 (QEQQQEQEQEQQQQQEQQQQQEQQREQQQQEQQQEQQQEQ) are compositionally biased toward low complexity.

Belongs to the apolipoprotein A1/A4/E family. In terms of assembly, homodimer. Phosphorylation sites are present in the extracellular medium. As to expression, secreted in plasma.

The protein resides in the secreted. May have a role in chylomicrons and VLDL secretion and catabolism. Required for efficient activation of lipoprotein lipase by ApoC-II; potent activator of LCAT. Apoa-IV is a major component of HDL and chylomicrons. This Macaca fascicularis (Crab-eating macaque) protein is Apolipoprotein A-IV (APOA4).